A 149-amino-acid polypeptide reads, in one-letter code: D-aminoacyl-tRNA deacylase (149 aa).

The Gly-cisPro motif, important for rejection of L-amino acids signature appears at 137–138 (GP).

This sequence belongs to the DTD family. Homodimer.

It is found in the cytoplasm. It carries out the reaction glycyl-tRNA(Ala) + H2O = tRNA(Ala) + glycine + H(+). It catalyses the reaction a D-aminoacyl-tRNA + H2O = a tRNA + a D-alpha-amino acid + H(+). An aminoacyl-tRNA editing enzyme that deacylates mischarged D-aminoacyl-tRNAs. Also deacylates mischarged glycyl-tRNA(Ala), protecting cells against glycine mischarging by AlaRS. Acts via tRNA-based rather than protein-based catalysis; rejects L-amino acids rather than detecting D-amino acids in the active site. By recycling D-aminoacyl-tRNA to D-amino acids and free tRNA molecules, this enzyme counteracts the toxicity associated with the formation of D-aminoacyl-tRNA entities in vivo and helps enforce protein L-homochirality. This Clostridium beijerinckii (strain ATCC 51743 / NCIMB 8052) (Clostridium acetobutylicum) protein is D-aminoacyl-tRNA deacylase.